Here is a 121-residue protein sequence, read N- to C-terminus: Chromosome transmission fidelity protein 8 homolog (121 aa).

The protein belongs to the CTF8 family. In terms of assembly, component of the CTF18-RFC complex, which consists of CTF18, CTF8, DSCC1, RFC2, RFC3, RFC4 and RFC5. The CTF18-RFC complex does not interact with the Rad9/Rad1/Hus1 complex. The CTF18-RFC complex interacts with POLH. CTF18/CTF8/DSCC1 associate with PCNA. CTF8 exists as a dimer with DSCC1.

The protein localises to the nucleus. Its function is as follows. Chromosome cohesion factor involved in sister chromatid cohesion and fidelity of chromosome transmission. Component of one of the cell nuclear antigen loader complexes, CTF18-replication factor C (CTF18-RFC), which consists of CTF18, CTF8, DSCC1, RFC2, RFC3, RFC4 and RFC5. The CTF18-RFC complex binds to single-stranded and primed DNAs and has weak ATPase activity that is stimulated the presence of primed DNA, replication protein A (RPA) and proliferating cell nuclear antigen (PCNA). The CTF18-RFC complex catalyzes the ATP-dependent loading of PCNA onto primed and gapped DNA. It also interacts with and stimulates POLH, which is suggestive of a protein network that coordinates DNA repair, recombination and chromosome cohesion reactions with replication fork progression. This chain is Chromosome transmission fidelity protein 8 homolog, found in Homo sapiens (Human).